We begin with the raw amino-acid sequence, 186 residues long: Translation initiation factor IF-3 (186 aa).

The protein belongs to the IF-3 family. Monomer.

The protein resides in the cytoplasm. Functionally, IF-3 binds to the 30S ribosomal subunit and shifts the equilibrium between 70S ribosomes and their 50S and 30S subunits in favor of the free subunits, thus enhancing the availability of 30S subunits on which protein synthesis initiation begins. The sequence is that of Translation initiation factor IF-3 from Chlamydia caviae (strain ATCC VR-813 / DSM 19441 / 03DC25 / GPIC) (Chlamydophila caviae).